A 356-amino-acid polypeptide reads, in one-letter code: Methionine import ATP-binding protein MetN (356 aa).

In terms of domain architecture, ABC transporter spans 7–250 (IKLDNIDVTF…PRESLTQDFI (244 aa)). 43–50 (GYSGAGKS) serves as a coordination point for ATP.

It belongs to the ABC transporter superfamily. Methionine importer (TC 3.A.1.24) family. The complex is composed of two ATP-binding proteins (MetN), two transmembrane proteins (MetI) and a solute-binding protein (MetQ).

It is found in the cell membrane. The catalysed reaction is L-methionine(out) + ATP + H2O = L-methionine(in) + ADP + phosphate + H(+). It catalyses the reaction D-methionine(out) + ATP + H2O = D-methionine(in) + ADP + phosphate + H(+). Part of the ABC transporter complex MetNIQ involved in methionine import. Responsible for energy coupling to the transport system. The chain is Methionine import ATP-binding protein MetN from Streptococcus agalactiae serotype Ia (strain ATCC 27591 / A909 / CDC SS700).